The chain runs to 141 residues: Drosulfakinins (141 aa).

Positions 1–31 (MGLRRCTHFATLVMPLWALALFFLVVMQVPA) are cleaved as a signal peptide. The propeptide occupies 32-73 (QTTSLQISKEDRRLQELESKMGAESEQPNANLVGPSISRFGD). The disordered stretch occupies residues 49–69 (ESKMGAESEQPNANLVGPSIS). The residue at position 82 (F82) is a Phenylalanine amide. Residues 86–111 (VPLISRPMIPIELDLLMDNDDERTKA) constitute a propeptide that is removed on maturation. Residue Y117 is modified to Sulfotyrosine. F122 carries the phenylalanine amide modification. Y134 carries the post-translational modification Sulfotyrosine. F139 carries the phenylalanine amide modification.

This sequence belongs to the gastrin/cholecystokinin family.

Its subcellular location is the secreted. Its function is as follows. Drosulfakinin-0 (DSK 0) plays diverse biological roles including regulating gut muscle contraction in adults but not in larvae. The protein is Drosulfakinins of Drosophila erecta (Fruit fly).